The following is a 509-amino-acid chain: NADH-quinone oxidoreductase subunit M (509 aa).

Residues 1–21 traverse the membrane as a helical segment; sequence MLLPWLILIPFIGGFLCWQTE. Residues 22 to 29 are Cytoplasmic-facing; that stretch reads RFGVKVPR. A helical membrane pass occupies residues 30 to 50; sequence WIALITMGLTLALSLQLWLQG. Over 51–82 the chain is Periplasmic; it reads GYSLTQSAGIPQWQSEFDMPWIPRFGISIHLA. A helical transmembrane segment spans residues 83-103; that stretch reads IDGLSLLMVVLTGLLGVLAVL. At 104 to 121 the chain is on the cytoplasmic side; it reads CSWKEIEKYQGFFHLNLM. The chain crosses the membrane as a helical span at residues 122–142; that stretch reads WILGGVIGVFLAIDMFLFFFF. Residues 143 to 173 are Periplasmic-facing; the sequence is WEMMLVPMYFLIALWGHKASDGKTRITAATK. The chain crosses the membrane as a helical span at residues 174 to 194; the sequence is FFIYTQASGLVMLIAILALVF. The Cytoplasmic segment spans residues 195–221; sequence VHYNATGVWTFNYEELLNTPMSSGVEY. The chain crosses the membrane as a helical span at residues 222 to 242; the sequence is LLMLGFFIAFAVKMPVVPLHG. At 243-258 the chain is on the periplasmic side; it reads WLPDAHSQAPTAGSVD. A helical transmembrane segment spans residues 259–279; that stretch reads LAGILLKTAAYGLLRFSLPLF. Residues 280–285 lie on the Cytoplasmic side of the membrane; sequence PNASAE. Residues 286–306 form a helical membrane-spanning segment; the sequence is FAPIAMWLGVIGIFYGAWMAF. The Periplasmic segment spans residues 307-313; the sequence is AQTDIKR. Residues 314 to 334 traverse the membrane as a helical segment; sequence LIAYTSVSHMGFVLIAIYTGS. Topologically, residues 335-339 are cytoplasmic; sequence QLAYQ. The chain crosses the membrane as a helical span at residues 340-360; sequence GAVIQMIAHGLSAAGLFILCG. Residues 361–382 are Periplasmic-facing; it reads QLYERIHTRDMRMMGGLWSKMK. A run of 2 helical transmembrane segments spans residues 383–403 and 404–424; these read WLPA…GTGN and FVGE…ITVI. A topological domain (periplasmic) is located at residue serine 425. A helical membrane pass occupies residues 426–446; sequence TFGLVFASVYSLAMLHRAYFG. At 447-464 the chain is on the cytoplasmic side; that stretch reads KAKSQIASQELPGMSLRE. A helical membrane pass occupies residues 465–485; the sequence is LFMILLLVVLLVLLGFYPQPI. Topologically, residues 486 to 509 are periplasmic; the sequence is LDTSHSAIGNIQQWFVNSVTTTRP.

It belongs to the complex I subunit 4 family. In terms of assembly, composed of 13 different subunits. Subunits NuoA, H, J, K, L, M, N constitute the membrane sector of the complex.

It is found in the cell inner membrane. The enzyme catalyses a quinone + NADH + 5 H(+)(in) = a quinol + NAD(+) + 4 H(+)(out). NDH-1 shuttles electrons from NADH, via FMN and iron-sulfur (Fe-S) centers, to quinones in the respiratory chain. The immediate electron acceptor for the enzyme in this species is believed to be ubiquinone. Couples the redox reaction to proton translocation (for every two electrons transferred, four hydrogen ions are translocated across the cytoplasmic membrane), and thus conserves the redox energy in a proton gradient. The sequence is that of NADH-quinone oxidoreductase subunit M (nuoM) from Escherichia coli O157:H7.